The following is a 342-amino-acid chain: Dihydroorotase (342 aa).

Zn(2+) is bound by residues H13 and H15. Residues 15–17 (HLR) and N41 each bind substrate. Residues K98, H135, and H173 each contribute to the Zn(2+) site. At K98 the chain carries N6-carboxylysine. H135 contacts substrate. Residue L218 participates in substrate binding. D246 is a Zn(2+) binding site. D246 is an active-site residue. Positions 250 and 262 each coordinate substrate.

Belongs to the metallo-dependent hydrolases superfamily. DHOase family. Class II DHOase subfamily. As to quaternary structure, homodimer. Zn(2+) is required as a cofactor.

The enzyme catalyses (S)-dihydroorotate + H2O = N-carbamoyl-L-aspartate + H(+). Its pathway is pyrimidine metabolism; UMP biosynthesis via de novo pathway; (S)-dihydroorotate from bicarbonate: step 3/3. In terms of biological role, catalyzes the reversible cyclization of carbamoyl aspartate to dihydroorotate. The chain is Dihydroorotase from Aliivibrio fischeri (strain MJ11) (Vibrio fischeri).